Reading from the N-terminus, the 605-residue chain is Protein cueball (605 aa).

Residues 1 to 31 (MAYIDQKHNTFWDDFAIALRDKIVFLNSTWG) form the signal peptide. 3 N-linked (GlcNAc...) asparagine glycosylation sites follow: Asn-27, Asn-64, and Asn-85. Over 32–486 (EIHASAHRFE…QCGPAPPVQG (455 aa)) the chain is Extracellular. LDL-receptor class B repeat units lie at residues 53–97 (EMIY…DPLN), 98–145 (RNLF…DICR), 146–190 (RQLY…DQLS), and 191–236 (DRIF…NEDA). N-linked (GlcNAc...) asparagine glycans are attached at residues Asn-261 and Asn-314. 2 consecutive EGF-like domains span residues 322–359 (EGDRISQLEREHCLNGASFMSRGEFCICPVGFKGARCE) and 394–431 (EYHKCNGHCLNSGHCSMDKESDAMRCECRPNFGGERCE). Disulfide bonds link Cys-334–Cys-347, Cys-349–Cys-358, Cys-398–Cys-408, Cys-402–Cys-419, and Cys-421–Cys-430. Residues Asn-433 and Asn-464 are each glycosylated (N-linked (GlcNAc...) asparagine). Residues 487–507 (PLIIVIVLGLVTTSGLVALTV) traverse the membrane as a helical segment. The Cytoplasmic segment spans residues 508–605 (HGVRLIYKPK…IHSMEDNLLS (98 aa)).

The protein belongs to the cueball family.

It localises to the cell membrane. In terms of biological role, has a role in spermatogenesis and oogenesis. The polypeptide is Protein cueball (Drosophila grimshawi (Hawaiian fruit fly)).